The primary structure comprises 421 residues: Bifunctional NAD biosynthesis protein NadR (421 aa).

The tract at residues 57–224 (EKKVGVIFGK…KFIPKEARPF (168 aa)) is nicotinamide mononucleotide adenylyltransferase. Residues 64–67 (FGKF), H71, R98, 139–152 (EDGIPSYPNGWQSW), 172–174 (SSE), 199–201 (FNV), 254–256 (SAW), and 289–292 (YIDY) each bind NAD(+). Positions 225–421 (FAKTVAILGG…TTFPIKGTSQ (197 aa)) are ribosylnicotinamide kinase.

This sequence in the N-terminal section; belongs to the bacterial NMN adenylyltransferase family. The protein in the C-terminal section; belongs to the bacterial RNK family. Homotetramer.

It localises to the cell membrane. The protein localises to the cytoplasm. The enzyme catalyses beta-nicotinamide D-ribonucleotide + ATP + H(+) = diphosphate + NAD(+). It catalyses the reaction beta-nicotinamide D-riboside + ATP = beta-nicotinamide D-ribonucleotide + ADP + H(+). Its pathway is cofactor biosynthesis; NAD(+) biosynthesis [regulation]. It functions in the pathway cofactor biosynthesis; NAD(+) biosynthesis; NAD(+) from nicotinamide D-ribonucleotide: step 1/1. With respect to regulation, feed-back regulated by NAD. At high levels of NAD the RN kinase activity is inhibited. This enzyme has two activities: nicotinamide mononucleotide (NMN) adenylyltransferase and ribosylnicotinamide (RN) kinase. The RN kinase activity catalyzes the phosphorylation of RN to form nicotinamide ribonucleotide. The NMN adenylyltransferase activity catalyzes the transfer of the AMP moiety of ATP to nicotinamide ribonucleotide to form NAD(+). The protein is Bifunctional NAD biosynthesis protein NadR (nadR) of Haemophilus influenzae (strain ATCC 51907 / DSM 11121 / KW20 / Rd).